We begin with the raw amino-acid sequence, 656 residues long: 1-deoxy-D-xylulose-5-phosphate synthase 1 (656 aa).

Residues His73 and 113 to 115 (SHA) contribute to the thiamine diphosphate site. Asp144 is a binding site for Mg(2+). Thiamine diphosphate is bound by residues 145–146 (GA), Asn174, Tyr285, and Glu367. Asn174 provides a ligand contact to Mg(2+). Residues 625–656 (AGDRAGGPAVEQPGDGRMSGDGRIVMPAQGEN) form a disordered region.

It belongs to the transketolase family. DXPS subfamily. As to quaternary structure, homodimer. Requires Mg(2+) as cofactor. Thiamine diphosphate serves as cofactor.

The catalysed reaction is D-glyceraldehyde 3-phosphate + pyruvate + H(+) = 1-deoxy-D-xylulose 5-phosphate + CO2. It functions in the pathway metabolic intermediate biosynthesis; 1-deoxy-D-xylulose 5-phosphate biosynthesis; 1-deoxy-D-xylulose 5-phosphate from D-glyceraldehyde 3-phosphate and pyruvate: step 1/1. Functionally, catalyzes the acyloin condensation reaction between C atoms 2 and 3 of pyruvate and glyceraldehyde 3-phosphate to yield 1-deoxy-D-xylulose-5-phosphate (DXP). This chain is 1-deoxy-D-xylulose-5-phosphate synthase 1, found in Streptomyces coelicolor (strain ATCC BAA-471 / A3(2) / M145).